The chain runs to 159 residues: Cyclic pyranopterin monophosphate synthase (159 aa).

Substrate is bound by residues 75-77 (LCH) and 113-114 (ME). Residue aspartate 128 is part of the active site.

It belongs to the MoaC family. Homohexamer; trimer of dimers.

The catalysed reaction is (8S)-3',8-cyclo-7,8-dihydroguanosine 5'-triphosphate = cyclic pyranopterin phosphate + diphosphate. It participates in cofactor biosynthesis; molybdopterin biosynthesis. In terms of biological role, catalyzes the conversion of (8S)-3',8-cyclo-7,8-dihydroguanosine 5'-triphosphate to cyclic pyranopterin monophosphate (cPMP). This Aliivibrio salmonicida (strain LFI1238) (Vibrio salmonicida (strain LFI1238)) protein is Cyclic pyranopterin monophosphate synthase.